We begin with the raw amino-acid sequence, 402 residues long: Flavohemoprotein (402 aa).

In terms of domain architecture, Globin spans 1 to 136; the sequence is MLSEKTIEIV…IADAFISIEA (136 aa). Histidine 85 provides a ligand contact to heme b. Residues tyrosine 95 and glutamate 135 each act as charge relay system in the active site. The interval 147 to 402 is reductase; it reads GGWKDFRNFV…EFFGPAASLQ (256 aa). Residues 150-260 form the FAD-binding FR-type domain; the sequence is KDFRNFVVVK…SAPAGDFVLN (111 aa). FAD contacts are provided by residues tyrosine 188 and 204–207; that span reads RQYS. 273–278 serves as a coordination point for NADP(+); it reads GVGITP. 394-397 serves as a coordination point for FAD; that stretch reads FFGP.

This sequence belongs to the globin family. Two-domain flavohemoproteins subfamily. It in the C-terminal section; belongs to the flavoprotein pyridine nucleotide cytochrome reductase family. Heme b is required as a cofactor. It depends on FAD as a cofactor.

The enzyme catalyses 2 nitric oxide + NADPH + 2 O2 = 2 nitrate + NADP(+) + H(+). It carries out the reaction 2 nitric oxide + NADH + 2 O2 = 2 nitrate + NAD(+) + H(+). Its function is as follows. Is involved in NO detoxification in an aerobic process, termed nitric oxide dioxygenase (NOD) reaction that utilizes O(2) and NAD(P)H to convert NO to nitrate, which protects the bacterium from various noxious nitrogen compounds. Therefore, plays a central role in the inducible response to nitrosative stress. In Bacillus cereus (strain ATCC 10987 / NRS 248), this protein is Flavohemoprotein.